A 273-amino-acid polypeptide reads, in one-letter code: Large ribosomal subunit protein uL2 (273 aa).

2 disordered regions span residues 28 to 53 (KPFAPLVEKNSKSGGRNNNGRITTRH) and 221 to 273 (RGTA…RRSK). Low complexity predominate over residues 39-48 (KSGGRNNNGR).

The protein belongs to the universal ribosomal protein uL2 family. In terms of assembly, part of the 50S ribosomal subunit. Forms a bridge to the 30S subunit in the 70S ribosome.

Functionally, one of the primary rRNA binding proteins. Required for association of the 30S and 50S subunits to form the 70S ribosome, for tRNA binding and peptide bond formation. It has been suggested to have peptidyltransferase activity; this is somewhat controversial. Makes several contacts with the 16S rRNA in the 70S ribosome. This Salmonella agona (strain SL483) protein is Large ribosomal subunit protein uL2.